The primary structure comprises 209 residues: Ribonuclease HII (209 aa).

One can recognise an RNase H type-2 domain in the interval 18-209 (SLVAGVDEVG…FKPVKALLER (192 aa)). Asp24, Glu25, and Asp116 together coordinate a divalent metal cation.

Belongs to the RNase HII family. Requires Mn(2+) as cofactor. The cofactor is Mg(2+).

Its subcellular location is the cytoplasm. It catalyses the reaction Endonucleolytic cleavage to 5'-phosphomonoester.. Its function is as follows. Endonuclease that specifically degrades the RNA of RNA-DNA hybrids. The protein is Ribonuclease HII of Shewanella oneidensis (strain ATCC 700550 / JCM 31522 / CIP 106686 / LMG 19005 / NCIMB 14063 / MR-1).